The sequence spans 234 residues: Staphylococcal superantigen-like 5 (234 aa).

Positions 1-30 (MKMTAIAKASLALGILATGTITSLHQTVNA) are cleaved as a signal peptide.

The protein belongs to the staphylococcal/streptococcal toxin family. As to quaternary structure, interacts with host SELPLG; this interaction prevents SELPLG-mediated neutrophil rolling. Interacts with host MMP9 (via sialic acid-containing O-glycans); this interaction inhibits MMP9 activity. Interacts with host GP1BA and GP6; these interactions play an important role in platelet binding and activation.

Secreted protein that plays a role in the inhibition of host innate immune system. Modulates the interaction between host SELPLG and P-selectin thereby preventing initial rolling of neutrophils toward the site of infection. Interferes with leukocyte trafficking by inhibiting host metalloproteinase-9/MMP9 activity. Also associates with two different platelet surface receptors GP1A and GP6 leading to platelet activation and aggregation. The sequence is that of Staphylococcal superantigen-like 5 from Staphylococcus aureus (strain NCTC 8325 / PS 47).